The chain runs to 140 residues: Nuclear receptor 2C2-associated protein (140 aa).

This sequence belongs to the NR2C2AP family. As to quaternary structure, interacts with NR2C2/TR4.

The protein localises to the nucleus. Functionally, may act as a repressor of NR2C2-mediated transactivation by suppressing the binding between NR2C2/TR4 and the TR4-response element in target genes. In Mus musculus (Mouse), this protein is Nuclear receptor 2C2-associated protein (Nr2c2ap).